A 117-amino-acid chain; its full sequence is Large ribosomal subunit protein bL20 (117 aa).

Belongs to the bacterial ribosomal protein bL20 family.

In terms of biological role, binds directly to 23S ribosomal RNA and is necessary for the in vitro assembly process of the 50S ribosomal subunit. It is not involved in the protein synthesizing functions of that subunit. The chain is Large ribosomal subunit protein bL20 from Symbiobacterium thermophilum (strain DSM 24528 / JCM 14929 / IAM 14863 / T).